Consider the following 108-residue polypeptide: Putative transmembrane protein ORF108 (108 aa).

The next 3 membrane-spanning stretches (helical) occupy residues 11-31 (FIMG…SSII), 33-53 (IAMT…TVHF), and 69-89 (VGFL…LLII).

The protein resides in the host membrane. This chain is Putative transmembrane protein ORF108, found in Acidianus hospitalis (AFV-1).